We begin with the raw amino-acid sequence, 353 residues long: MALSPEKEKALAAAMSQIDRKYGKGSIMRMGEASSKLAIEVIPTGSIALDIALGVGGVPRGRVVEIYGPESSGKTTLAQHIIAEAQKMGGVAAFIDAEHAFDPVYAKRCGVDVDNLLVSQPDYGEQALEICETLVRSNAVDVVVVDSVAALVPRAEIEGDMGDSLPGLQARLMSQALRKLSGAISKSRVVVIFLNQLRLKIGVMFGSPETTTGGQALKFYASVRMDIRRIETLKNGQETIGSRTRVKVVKNKVAPPFRQAEFDIMHNEGISRAGNILDVGVELDIIRKSGAWFYLGEDRLGQGRENAKQFLNENPALADEIERLIRAHAMAAPISIAASKADDVVDDAGLFEE.

68-75 is an ATP binding site; sequence GPESSGKT.

It belongs to the RecA family.

The protein localises to the cytoplasm. Functionally, can catalyze the hydrolysis of ATP in the presence of single-stranded DNA, the ATP-dependent uptake of single-stranded DNA by duplex DNA, and the ATP-dependent hybridization of homologous single-stranded DNAs. It interacts with LexA causing its activation and leading to its autocatalytic cleavage. The protein is Protein RecA of Roseiflexus castenholzii (strain DSM 13941 / HLO8).